We begin with the raw amino-acid sequence, 644 residues long: Sodium/hydrogen exchanger 9 (644 aa).

At 1-20 the chain is on the lumenal side; sequence MERQRRFMSEKDEYQFQHQG. Residues 21 to 41 form a helical membrane-spanning segment; that stretch reads AVELLVFNFLLILTILTIWLF. Over 42 to 45 the chain is Cytoplasmic; it reads KNHR. The chain crosses the membrane as a helical span at residues 46–66; that stretch reads FRFLHETGGAMVYGLIMGLIL. The Lumenal portion of the chain corresponds to 67–126; sequence RYATAPTDIESGTVYDCGKLAFSPSTLLINITDQVYEYKYKREISQHNINPHLGNAILEK. The chain crosses the membrane as a helical span at residues 127–147; the sequence is MTFDPEIFFNVLLPPIIFHAG. The Cytoplasmic segment spans residues 148 to 164; sequence YSLKKRHFFQNLGSILT. A helical transmembrane segment spans residues 165-185; that stretch reads YAFLGTAISCIVIGLIMYGFV. At 186 to 203 the chain is on the lumenal side; the sequence is KAMVYAGQLKNGDFHFTD. The chain crosses the membrane as a helical span at residues 204-224; sequence CLFFGSLMSATDPVTVLAIFH. Topologically, residues 225 to 235 are cytoplasmic; that stretch reads ELHVDPDLYTL. A helical membrane pass occupies residues 236–256; it reads LFGESVLNDAVAIVLTYSISI. The Lumenal portion of the chain corresponds to 257-277; sequence YSPKENPNAFDAAAFFQSVGN. Residues 278-298 traverse the membrane as a helical segment; sequence FLGIFAGSFAMGSAYAVVTAL. Topologically, residues 299–301 are cytoplasmic; the sequence is LTK. 2 helical membrane passes run 302-322 and 323-343; these read FTKL…LSWS and AFLS…FCGV. The Cytoplasmic segment spans residues 344-364; the sequence is TQAHYTYNNLSLDSKMRTKQL. Residues 365–385 traverse the membrane as a helical segment; sequence FEFMNFLAENVIFCYMGLALF. Residue threonine 386 is a topological domain, lumenal. The chain crosses the membrane as a helical span at residues 387-407; the sequence is FQNHIFNALFILGAFLAIFVA. Over 408–429 the chain is Cytoplasmic; it reads RACNIYPLSFLLNLGRKHKIPW. The helical transmembrane segment at 430–450 threads the bilayer; it reads NFQHMMMFSGLRGAIAFALAI. Residues 451 to 465 lie on the Lumenal side of the membrane; the sequence is RDTESQPKQMMFSTT. A helical transmembrane segment spans residues 466–486; it reads LLLVFFTVWVFGGGTTPMLTW. The Cytoplasmic segment spans residues 487–644; it reads LQIRVGVDLD…EQTPGQSQLN (158 aa). The interval 593 to 622 is disordered; that stretch reads QAASPCSPPTRLGLDQKAAPQTPGKENIYE.

This sequence belongs to the monovalent cation:proton antiporter 1 (CPA1) transporter (TC 2.A.36) family. Homodimer; phosphatidylinositol-4,5-bisphosphate (PIP2) and phosphatidylinositol 3,4,5-trisphosphate (PIP3) could be involved in the dimer stabilization. Interacts (via the C-terminus) with RACK1. Interacts with CHP1.

It is found in the late endosome membrane. Its subcellular location is the early endosome membrane. The protein localises to the recycling endosome membrane. It localises to the cell membrane. The protein resides in the cytoplasmic vesicle. It is found in the phagosome membrane. The enzyme catalyses Na(+)(in) + H(+)(out) = Na(+)(out) + H(+)(in). It catalyses the reaction K(+)(in) + H(+)(out) = K(+)(out) + H(+)(in). Endosomal Na(+), K(+)/H(+) antiporter. Mediates the electroneutral exchange of endosomal luminal H(+) for a cytosolic Na(+) or K(+). By facilitating proton efflux, SLC9A9 counteracts the acidity generated by vacuolar (V)-ATPase, thereby limiting luminal acidification. Regulates organellar pH and consequently, endosome maturation and endocytic trafficking of plasma membrane receptors and neurotransporters. Promotes the recycling of transferrin receptors back to the cell surface to facilitate additional iron uptake in the brain. Regulates synaptic transmission by regulating the luminal pH of axonal endosomes. Regulates phagosome lumenal pH, thus affecting phagosome maturation, and consequently, microbicidal activity in macrophages. Can also be active at the cell surface of specialized cells, e.g., in the inner ear hair bundles uses the high K(+) of the endolymph to regulate intracelular pH. The protein is Sodium/hydrogen exchanger 9 (SLC9A9) of Equus caballus (Horse).